Reading from the N-terminus, the 342-residue chain is Methionine import ATP-binding protein MetN 3 (342 aa).

The ABC transporter domain maps to 2–241 (ISLKGISKTF…PKEQMTKEFV (240 aa)). Residue 38–45 (GYSGAGKS) coordinates ATP.

It belongs to the ABC transporter superfamily. Methionine importer (TC 3.A.1.24) family. In terms of assembly, the complex is composed of two ATP-binding proteins (MetN), two transmembrane proteins (MetI) and a solute-binding protein (MetQ).

Its subcellular location is the cell membrane. It catalyses the reaction L-methionine(out) + ATP + H2O = L-methionine(in) + ADP + phosphate + H(+). The enzyme catalyses D-methionine(out) + ATP + H2O = D-methionine(in) + ADP + phosphate + H(+). Its function is as follows. Part of the ABC transporter complex MetNIQ involved in methionine import. Responsible for energy coupling to the transport system. This chain is Methionine import ATP-binding protein MetN 3, found in Shouchella clausii (strain KSM-K16) (Alkalihalobacillus clausii).